The following is a 188-amino-acid chain: Glandular kallikrein-3, submandibular (188 aa).

The Peptidase S1 domain maps to 1–185; it reads NYHVLLGQNN…FTSWIKEVMK (185 aa). 2 N-linked (GlcNAc...) asparagine glycosylation sites follow: Asn-10 and Asn-36. Asp-47 (charge relay system) is an active-site residue. Intrachain disulfides connect Cys-79–Cys-146, Cys-111–Cys-125, and Cys-136–Cys-161. Catalysis depends on Ser-140, which acts as the Charge relay system.

This sequence belongs to the peptidase S1 family. Kallikrein subfamily.

It carries out the reaction Preferential cleavage of Arg-|-Xaa bonds in small molecule substrates. Highly selective action to release kallidin (lysyl-bradykinin) from kininogen involves hydrolysis of Met-|-Xaa or Leu-|-Xaa.. Its function is as follows. Glandular kallikreins cleave Met-Lys and Arg-Ser bonds in kininogen to release Lys-bradykinin. This chain is Glandular kallikrein-3, submandibular (Klk3), found in Rattus norvegicus (Rat).